A 627-amino-acid polypeptide reads, in one-letter code: (+)-3-carene synthase 1, chloroplastic (627 aa).

The N-terminal 36 residues, 1–36 (MSVISIVPLASKPCLYKSFISSTHEPKALRRPISTV), are a transit peptide targeting the chloroplast. 3 residues coordinate Mg(2+): Asp378, Asp382, and Asp530. The DDXXD motif motif lies at 378–382 (DDMYD).

It belongs to the terpene synthase family. Tpsd subfamily. It depends on Mg(2+) as a cofactor. Requires Mn(2+) as cofactor.

Its subcellular location is the plastid. The protein resides in the chloroplast. It carries out the reaction (2E)-geranyl diphosphate = (+)-car-3-ene + diphosphate. It functions in the pathway terpene metabolism; oleoresin biosynthesis. In terms of biological role, terpene synthase (TPS) involved in the biosynthesis of monoterpene natural products included in conifer oleoresin secretions and volatile emissions; these compounds contribute to biotic and abiotic stress defense against herbivores (e.g. insect attack by white pine weevil P.strobi) and pathogens. Catalyzes the conversion of (2E)-geranyl diphosphate (GPP) to (+)-car-3-ene. The chain is (+)-3-carene synthase 1, chloroplastic from Picea sitchensis (Sitka spruce).